We begin with the raw amino-acid sequence, 427 residues long: MAPGSNGIMDGMHRRIGEAGAFFRSFVPFFLQNVRHDRIFLSAGSLAFQTLLSIVPLLAVVLSILNVFAVFAPLQPYVEDFIVHNFVPGTGGMIREYFSGFIGNTFTMPIFGALFLFIVALVLISTVDHTLNEIWEVHSPRKVLQGFTLYWTVLTLGPVLLATSLAASSFVWYTVFTEGPLLELKTRLLSLLPSTITVLALLLLYLLVPNRRVRFLHALSGALVATLLFEVSKRWFAFYVANVATFEHIYGALSVIPMLFFWIYLGWVVVLTGAEIVYCLGARRLSGPAAPEFDPLRGVPLMLAVLRMVWRAGGEGVVLDMKKILREFHRENPSSLRKIVDILLECRFMHLTASGGMAAASDLHVMTLYDLFIKLPPDFGAEDFGQAGPAWDGIELQGVRERLGACFEESMHVPLIQLMDGSNEGQV.

The next 6 helical transmembrane spans lie at 51–71 (LLSI…FAVF), 105–125 (TFTM…VLIS), 147–167 (FTLY…SLAA), 188–208 (LLSL…YLLV), 221–241 (GALV…FYVA), and 251–271 (GALS…VVVL).

This sequence belongs to the UPF0761 family.

The protein localises to the cell inner membrane. The polypeptide is UPF0761 membrane protein Plut_1323 (Chlorobium luteolum (strain DSM 273 / BCRC 81028 / 2530) (Pelodictyon luteolum)).